A 189-amino-acid chain; its full sequence is Elongation factor P (189 aa).

Belongs to the elongation factor P family.

The protein localises to the cytoplasm. The protein operates within protein biosynthesis; polypeptide chain elongation. In terms of biological role, involved in peptide bond synthesis. Stimulates efficient translation and peptide-bond synthesis on native or reconstituted 70S ribosomes in vitro. Probably functions indirectly by altering the affinity of the ribosome for aminoacyl-tRNA, thus increasing their reactivity as acceptors for peptidyl transferase. This Chloroflexus aggregans (strain MD-66 / DSM 9485) protein is Elongation factor P.